Reading from the N-terminus, the 471-residue chain is Indole-3-acetate beta-glucosyltransferase (471 aa).

Catalysis depends on His15, which acts as the Proton acceptor. Position 15 (His15) interacts with an anthocyanidin. The active-site Charge relay is Asp107. The UDP-alpha-D-glucose site is built by Thr129, Gln344, His359, Trp362, Asn363, Ser364, Glu367, Asp383, and Gln384.

It belongs to the UDP-glycosyltransferase family.

The enzyme catalyses (indol-3-yl)acetate + UDP-alpha-D-glucose = 1-O-(indol-3-ylacetyl)-beta-D-glucose + UDP. It participates in plant hormone metabolism; auxin conjugation. The polypeptide is Indole-3-acetate beta-glucosyltransferase (IAGLU) (Zea mays (Maize)).